A 178-amino-acid polypeptide reads, in one-letter code: CASP-like protein 4D1 (178 aa).

Topologically, residues methionine 1–arginine 14 are cytoplasmic. A helical membrane pass occupies residues threonine 15 to isoleucine 35. Over serine 36–arginine 60 the chain is Extracellular. A helical membrane pass occupies residues tyrosine 61–isoleucine 81. The Cytoplasmic segment spans residues serine 82–alanine 149. The helical transmembrane segment at serine 150–leucine 170 threads the bilayer. Topologically, residues serine 171 to serine 178 are extracellular.

The protein belongs to the Casparian strip membrane proteins (CASP) family. As to quaternary structure, homodimer and heterodimers.

The protein resides in the cell membrane. In Arabidopsis lyrata subsp. lyrata (Lyre-leaved rock-cress), this protein is CASP-like protein 4D1.